The sequence spans 179 residues: ATP synthase subunit delta (179 aa).

The protein belongs to the ATPase delta chain family. F-type ATPases have 2 components, F(1) - the catalytic core - and F(0) - the membrane proton channel. F(1) has five subunits: alpha(3), beta(3), gamma(1), delta(1), epsilon(1). F(0) has three main subunits: a(1), b(2) and c(10-14). The alpha and beta chains form an alternating ring which encloses part of the gamma chain. F(1) is attached to F(0) by a central stalk formed by the gamma and epsilon chains, while a peripheral stalk is formed by the delta and b chains.

The protein resides in the cell inner membrane. Functionally, f(1)F(0) ATP synthase produces ATP from ADP in the presence of a proton or sodium gradient. F-type ATPases consist of two structural domains, F(1) containing the extramembraneous catalytic core and F(0) containing the membrane proton channel, linked together by a central stalk and a peripheral stalk. During catalysis, ATP synthesis in the catalytic domain of F(1) is coupled via a rotary mechanism of the central stalk subunits to proton translocation. This protein is part of the stalk that links CF(0) to CF(1). It either transmits conformational changes from CF(0) to CF(1) or is implicated in proton conduction. The protein is ATP synthase subunit delta of Burkholderia mallei (strain SAVP1).